The sequence spans 1280 residues: SET and MYND domain-containing protein DDB_G0284059 (1280 aa).

Disordered regions lie at residues 1 to 35 and 111 to 167; these read MTKKIKLSNSESNKVNNNNNNNHGNGHNHNHSHNH and INKI…QKQQ. Composition is skewed to low complexity over residues 16-25 and 117-153; these read NNNNNNNHGN and ENSPPSSPTLSSSTNTTTDRQELPQQQQQPQQQQSQP. TPR repeat units lie at residues 272–305 and 383–416; these read SKGYKNKGNELFQKKQYSDALLLYNESLRIYDME and HKLYYRRGICYYHLRKHYKAKKDFLRAHTLIEKR. A coiled-coil region spans residues 439 to 468; sequence QKDEEIEQELDNKNNNSNDDEKQQQQQQQQ. 8 residues coordinate Zn(2+): Cys533, Cys536, Cys546, Cys549, Cys555, Cys559, His568, and Cys572. The segment at 533-572 adopts an MYND-type zinc-finger fold; that stretch reads CYNCFKEILSPIYCKECSNSQYCSNKCLNEDYVKQHGREC. Disordered regions lie at residues 601–642, 659–726, 854–905, and 1039–1079; these read ANKG…QNLN, ALSS…TTTT, QQQQ…PFSP, and AKLQ…LNNN. 5 stretches are compositionally biased toward low complexity: residues 659–697, 712–726, 854–898, 1042–1053, and 1061–1079; these read ALSSASTPTTATATTTTTTTTATTPTTLAETLSSTSLTE, SSSSSSSSSSSTTTT, QQQQ…QNPP, QQQQQQQQQHQQ, and NSNPTNLGSNNNNNYLNNN. An SET domain is found at 822 to 965; it reads CQLTTYTFAI…KGEEILGCYG (144 aa). One copy of the TPR 3 repeat lies at 1218–1251; sequence GREYSKLGQIYLTLGEIEKSEDAIEKAESILMSW.

The protein belongs to the class V-like SAM-binding methyltransferase superfamily.

Probable methyltransferase. This Dictyostelium discoideum (Social amoeba) protein is SET and MYND domain-containing protein DDB_G0284059.